Here is a 453-residue protein sequence, read N- to C-terminus: Phosphomannomutase (453 aa).

The Phosphoserine intermediate role is filled by Ser-96. Mg(2+) is bound by residues Ser-96, Asp-243, Asp-245, and Asp-247.

It belongs to the phosphohexose mutase family. Requires Mg(2+) as cofactor.

It catalyses the reaction alpha-D-mannose 1-phosphate = D-mannose 6-phosphate. Its pathway is nucleotide-sugar biosynthesis; GDP-alpha-D-mannose biosynthesis; alpha-D-mannose 1-phosphate from D-fructose 6-phosphate: step 2/2. The protein operates within bacterial outer membrane biogenesis; LPS O-antigen biosynthesis. Functionally, involved in GDP-mannose biosynthesis which serves as the activated sugar nucleotide precursor for mannose residues in cell surface polysaccharides. This enzyme participates in synthesis of the LPS O7 antigen. This is Phosphomannomutase (manB) from Escherichia coli.